A 163-amino-acid chain; its full sequence is Periplasmic nitrate reductase, electron transfer subunit (163 aa).

The signal sequence occupies residues 1 to 32 (MRSQDPSRRLSRRLWTLFALALCLVTGTVALA). Heme c-binding residues include H76, C90, C93, H94, H111, C130, C133, and H134.

It belongs to the NapB family. Component of the periplasmic nitrate reductase NapAB complex composed of NapA and NapB. Binds 2 heme C groups per subunit.

The protein resides in the periplasm. In terms of biological role, electron transfer subunit of the periplasmic nitrate reductase complex NapAB. Receives electrons from the membrane-anchored tetraheme c-type NapC protein and transfers these to NapA subunit, thus allowing electron flow between membrane and periplasm. Essential for periplasmic nitrate reduction with nitrate as the terminal electron acceptor. This Neorhizobium galegae (Rhizobium galegae) protein is Periplasmic nitrate reductase, electron transfer subunit.